We begin with the raw amino-acid sequence, 410 residues long: Chaperonin GroEL (410 aa).

ATP is bound by residues 29–32 (TAGP), Lys50, and 86–90 (DGTTT).

The protein belongs to the chaperonin (HSP60) family. Forms a cylinder of 14 subunits composed of two heptameric rings stacked back-to-back. Interacts with the co-chaperonin GroES.

Its subcellular location is the cytoplasm. It carries out the reaction ATP + H2O + a folded polypeptide = ADP + phosphate + an unfolded polypeptide.. In terms of biological role, together with its co-chaperonin GroES, plays an essential role in assisting protein folding. The GroEL-GroES system forms a nano-cage that allows encapsulation of the non-native substrate proteins and provides a physical environment optimized to promote and accelerate protein folding. This is Chaperonin GroEL from Ehrlichia canis.